Consider the following 302-residue polypeptide: MDQERLTHLKQLEAESIHIIREVAAEFDNPVMMYSIGKDSSVMLHLARKAFYPGKIPFPLLHVDTDWKFREMIEFRDRTAEKYGFDLLVHKNPEGIEMGCSPFVHGSSKHTDIMKTQGLKQALNKYGFDAAFGGARRDEEKSRAKERVYSFRDKNHTWDPKNQRPELWHTYNGQVNKGESIRVFPLSNWTELDIWQYIYLESIDIVPLYLSDKRPVVERDGMLIMVDDDRMELQEGEVIEEKSVRFRTLGCYPLTGAVESEANTLTGIIEEMLVATSSERQGRAIDHDQSGSMELKKRQGYF.

Residues 280-302 (RQGRAIDHDQSGSMELKKRQGYF) form a disordered region.

It belongs to the PAPS reductase family. CysD subfamily. In terms of assembly, heterodimer composed of CysD, the smaller subunit, and CysN.

It catalyses the reaction sulfate + ATP + H(+) = adenosine 5'-phosphosulfate + diphosphate. The protein operates within sulfur metabolism; hydrogen sulfide biosynthesis; sulfite from sulfate: step 1/3. Its function is as follows. With CysN forms the ATP sulfurylase (ATPS) that catalyzes the adenylation of sulfate producing adenosine 5'-phosphosulfate (APS) and diphosphate, the first enzymatic step in sulfur assimilation pathway. APS synthesis involves the formation of a high-energy phosphoric-sulfuric acid anhydride bond driven by GTP hydrolysis by CysN coupled to ATP hydrolysis by CysD. The sequence is that of Sulfate adenylyltransferase subunit 2 from Vibrio atlanticus (strain LGP32) (Vibrio splendidus (strain Mel32)).